The following is a 505-amino-acid chain: 4-trimethylaminobutyraldehyde dehydrogenase (505 aa).

Residues K191 and 243–247 (GSVPT) contribute to the NAD(+) site. Catalysis depends on E265, which acts as the Proton acceptor. C299 (nucleophile) is an active-site residue. Residue E402 participates in NAD(+) binding.

The protein belongs to the aldehyde dehydrogenase family. In terms of assembly, homotetramer. Constitutively expressed in all organs tested: brain, eye, gill, GI, heart, liver, kidney, muscle, skin, testis and ovary.

Its subcellular location is the cytoplasm. The protein resides in the cytosol. The enzyme catalyses 4-(trimethylamino)butanal + NAD(+) + H2O = 4-(trimethylamino)butanoate + NADH + 2 H(+). It catalyses the reaction an aldehyde + NAD(+) + H2O = a carboxylate + NADH + 2 H(+). Its pathway is amine and polyamine biosynthesis; carnitine biosynthesis. Functionally, converts gamma-trimethylaminobutyraldehyde into gamma-butyrobetaine with high efficiency (in vitro). Can catalyze the irreversible oxidation of a broad range of aldehydes to the corresponding acids in an NAD-dependent reaction, but with low efficiency. The polypeptide is 4-trimethylaminobutyraldehyde dehydrogenase (aldh9A1) (Oryzias latipes (Japanese rice fish)).